A 438-amino-acid chain; its full sequence is Probable trafficking protein particle complex subunit 13 homolog (438 aa).

It belongs to the TRAPPC13 family.

This Drosophila melanogaster (Fruit fly) protein is Probable trafficking protein particle complex subunit 13 homolog.